A 480-amino-acid polypeptide reads, in one-letter code: Sestrin-2 (480 aa).

Position 1 is an N-acetylmethionine (Met-1). The segment at 20-43 (RGGVAGPETREEHREGQARRGSRG) is disordered. The segment covering 27–37 (ETREEHREGQA) has biased composition (basic and acidic residues). Residues 66 to 239 (GLEALMSSGR…APSPPSEQGT (174 aa)) form an N-terminal domain; mediates the alkylhydroperoxide reductase activity region. Cys-125 acts as the Cysteine sulfenic acid (-SOH) intermediate in catalysis. Lys-175 participates in a covalent cross-link: Glycyl lysine isopeptide (Lys-Gly) (interchain with G-Cter in ubiquitin). 2 disordered regions span residues 221 to 251 (DAEGSPASQAPSPPSEQGTPPSGDPLNNSGG) and 272 to 291 (LLRDEGASQEEMENRFELEK). Over residues 223-238 (EGSPASQAPSPPSEQG) the composition is skewed to low complexity. Position 249 is a phosphoserine (Ser-249). The C-terminal domain; mediates TORC1 regulation stretch occupies residues 308-480 (PHPDILCFVE…ALRAITRYMT (173 aa)). Residues 374-377 (TYNT), Thr-386, and Glu-451 contribute to the L-leucine site.

It belongs to the sestrin family. As to quaternary structure, interacts with the GATOR2 complex which is composed of MIOS, SEC13, SEH1L, WDR24 and WDR59; the interaction is negatively regulated by leucine. Conveys leucine availability via direct interaction with SEH1L and WDR24 components of the GATOR2 complex. Interacts with RRAGA, RRAGB, RRAGC and RRAGD; may function as a guanine nucleotide dissociation inhibitor for RRAGs and regulate them. May interact with the TORC2 complex. Interacts with KEAP1, RBX1, SQSTM and ULK1; to regulate the degradation of KEAP1. May also associate with the complex composed of TSC1, TSC2 and the AMP-responsive protein kinase/AMPK to regulate TORC1 signaling. May interact with PRDX1. Post-translationally, phosphorylated by ULK1 at multiple sites. Ubiquitinated at Lys-175 by RNF167 via 'Lys-63'-linked polyubiquitination in response to leucine deprivation: ubiquitination promotes SESN2-interaction with the GATOR2 complex, leading to inhibit the TORC1 signaling pathway. Deubiquitinated at Lys-175 by STAMBPL1, promoting the TORC1 signaling pathway. Ubiquitinated by RNF186; ubiquitination mediates proteasomal degradation. Detected in heart, liver and skeletal muscles (at protein level).

The protein localises to the cytoplasm. The enzyme catalyses a hydroperoxide + L-cysteinyl-[protein] = S-hydroxy-L-cysteinyl-[protein] + an alcohol. Functions as an intracellular leucine sensor that negatively regulates the mTORC1 signaling pathway through the GATOR complex. In absence of leucine, binds the GATOR subcomplex GATOR2 and prevents mTORC1 signaling. Binding of leucine to SESN2 disrupts its interaction with GATOR2 thereby activating the TORC1 signaling pathway. This stress-inducible metabolic regulator also plays a role in protection against oxidative and genotoxic stresses. May negatively regulate protein translation in response to endoplasmic reticulum stress, via mTORC1. May positively regulate the transcription by NFE2L2 of genes involved in the response to oxidative stress by facilitating the SQSTM1-mediated autophagic degradation of KEAP1. May also mediate TP53 inhibition of TORC1 signaling upon genotoxic stress. Moreover, may prevent the accumulation of reactive oxygen species (ROS) through the alkylhydroperoxide reductase activity born by the N-terminal domain of the protein. Was originally reported to contribute to oxidative stress resistance by reducing PRDX1. However, this could not be confirmed. This is Sestrin-2 from Mus musculus (Mouse).